A 389-amino-acid chain; its full sequence is Arginine biosynthesis bifunctional protein ArgJ (389 aa).

Substrate is bound by residues Thr150, Lys173, Thr184, Glu263, Asn384, and Thr389. The Nucleophile role is filled by Thr184.

It belongs to the ArgJ family. Heterotetramer of two alpha and two beta chains.

The protein localises to the cytoplasm. The catalysed reaction is N(2)-acetyl-L-ornithine + L-glutamate = N-acetyl-L-glutamate + L-ornithine. It carries out the reaction L-glutamate + acetyl-CoA = N-acetyl-L-glutamate + CoA + H(+). It functions in the pathway amino-acid biosynthesis; L-arginine biosynthesis; L-ornithine and N-acetyl-L-glutamate from L-glutamate and N(2)-acetyl-L-ornithine (cyclic): step 1/1. The protein operates within amino-acid biosynthesis; L-arginine biosynthesis; N(2)-acetyl-L-ornithine from L-glutamate: step 1/4. Functionally, catalyzes two activities which are involved in the cyclic version of arginine biosynthesis: the synthesis of N-acetylglutamate from glutamate and acetyl-CoA as the acetyl donor, and of ornithine by transacetylation between N(2)-acetylornithine and glutamate. In Deinococcus radiodurans (strain ATCC 13939 / DSM 20539 / JCM 16871 / CCUG 27074 / LMG 4051 / NBRC 15346 / NCIMB 9279 / VKM B-1422 / R1), this protein is Arginine biosynthesis bifunctional protein ArgJ.